Consider the following 303-residue polypeptide: B1 kinase (303 aa).

Belongs to the protein kinase superfamily. Ser/Thr protein kinase family. Poxviruses subfamily. Interacts with host JIP1; this interaction increases the amount of MAPK bound to JIP1 and subsequently increases the activity of transcription factors, such as JUN, that respond to these complexes. Interacts with protein OPG198; this interaction inhibits the repressive activity of OPG198 pseudokinase on viral replication factory formation. It depends on Mg(2+) as a cofactor. In terms of processing, autophosphorylated.

The protein resides in the virion. The protein localises to the host cytoplasm. The catalysed reaction is L-seryl-[protein] + ATP = O-phospho-L-seryl-[protein] + ADP + H(+). It catalyses the reaction L-threonyl-[protein] + ATP = O-phospho-L-threonyl-[protein] + ADP + H(+). In terms of biological role, essential serine/threonine-protein kinase that plays different role in the viral life cycle. Phosphorylates the host small ribosomal protein RACK1 thereby customizing the ribosomes to a state optimal for viral mRNAs (which contain poly-A leaders) but not for host mRNAs. Facilitates viral DNA replication by inhibiting host BANF1, a cellular host defense responsive to foreign DNA. Phosphorylates host BANF1 on serine and threonine residues; this leads to BANF1 relocalization to the cytoplasm, loss of dimerization and impaired DNA binding activity. Indeed, BANF1 activity depends on its DNA-binding property which is blocked by VPK1-mediated phosphorylation. Required for viral intermediate genes expression, probably by inhibiting host BANF1. Modulates cellular responses via host JUN by two different mechanisms, either by direct phosphorylation or by modulation of upstream JIP1-MAPK complexes. Seems to participate in the accumulation/processing of late proteins and thus in virion maturation. In addition, inhibits B12 repressive activity on viral DNA replication via a phosphorylation-dependent mechanism. This is B1 kinase (OPG187) from Cynomys gunnisoni (Gunnison's prairie dog).